We begin with the raw amino-acid sequence, 471 residues long: Protein translocase subunit SecF (471 aa).

The interval Met1–Ala29 is disordered. Residues Lys13–Asn23 show a composition bias toward basic and acidic residues. Transmembrane regions (helical) follow at residues Gly88–Ile108, Ile211–Thr231, Ala242–Phe262, Ala267–Phe287, Leu325–Gly345, and Leu355–Thr375. Residues Arg393–Arg471 form a disordered region. Residues Lys415 to Gly431 are compositionally biased toward polar residues. The span at Pro448–Arg460 shows a compositional bias: low complexity. Basic residues predominate over residues Pro461–Arg471.

It belongs to the SecD/SecF family. SecF subfamily. As to quaternary structure, forms a complex with SecD. Part of the essential Sec protein translocation apparatus which comprises SecA, SecYEG and auxiliary proteins SecDF. Other proteins may also be involved.

The protein localises to the cell membrane. In terms of biological role, part of the Sec protein translocase complex. Interacts with the SecYEG preprotein conducting channel. SecDF uses the proton motive force (PMF) to complete protein translocation after the ATP-dependent function of SecA. The protein is Protein translocase subunit SecF of Mycobacterium leprae (strain TN).